Reading from the N-terminus, the 201-residue chain is LIM domain-containing protein PLIM2b (201 aa).

LIM zinc-binding domains lie at D8 to E68 and D103 to E163. The segment at K171–N201 is disordered. Positions Q177–E187 are enriched in low complexity.

As to quaternary structure, interacts with NEK3.

In Oryza sativa subsp. japonica (Rice), this protein is LIM domain-containing protein PLIM2b.